Consider the following 689-residue polypeptide: Glycine--tRNA ligase beta subunit (689 aa).

The protein belongs to the class-II aminoacyl-tRNA synthetase family. Tetramer of two alpha and two beta subunits.

Its subcellular location is the cytoplasm. The enzyme catalyses tRNA(Gly) + glycine + ATP = glycyl-tRNA(Gly) + AMP + diphosphate. The chain is Glycine--tRNA ligase beta subunit from Shewanella baltica (strain OS223).